The primary structure comprises 267 residues: 4-hydroxy-tetrahydrodipicolinate reductase (267 aa).

NAD(+) is bound by residues 8 to 13 (GAAGRM) and E34. R35 is a binding site for NADP(+). NAD(+) contacts are provided by residues 98 to 100 (GST) and 122 to 125 (APNM). Residue H155 is the Proton donor/acceptor of the active site. A (S)-2,3,4,5-tetrahydrodipicolinate-binding site is contributed by H156. K159 serves as the catalytic Proton donor. 165–166 (GT) provides a ligand contact to (S)-2,3,4,5-tetrahydrodipicolinate.

It belongs to the DapB family.

The protein resides in the cytoplasm. It carries out the reaction (S)-2,3,4,5-tetrahydrodipicolinate + NAD(+) + H2O = (2S,4S)-4-hydroxy-2,3,4,5-tetrahydrodipicolinate + NADH + H(+). It catalyses the reaction (S)-2,3,4,5-tetrahydrodipicolinate + NADP(+) + H2O = (2S,4S)-4-hydroxy-2,3,4,5-tetrahydrodipicolinate + NADPH + H(+). The protein operates within amino-acid biosynthesis; L-lysine biosynthesis via DAP pathway; (S)-tetrahydrodipicolinate from L-aspartate: step 4/4. Functionally, catalyzes the conversion of 4-hydroxy-tetrahydrodipicolinate (HTPA) to tetrahydrodipicolinate. This is 4-hydroxy-tetrahydrodipicolinate reductase from Citrifermentans bemidjiense (strain ATCC BAA-1014 / DSM 16622 / JCM 12645 / Bem) (Geobacter bemidjiensis).